Consider the following 362-residue polypeptide: 3-isopropylmalate dehydrogenase (362 aa).

78 to 91 (GYKWDSLPPHQRPE) contributes to the NAD(+) binding site. Positions 98, 108, 136, and 226 each coordinate substrate. Mg(2+) is bound by residues Asp226, Asp250, and Asp254. 284–296 (GSAPDIAGQDKAN) contacts NAD(+).

The protein belongs to the isocitrate and isopropylmalate dehydrogenases family. LeuB type 1 subfamily. Homodimer. The cofactor is Mg(2+). Requires Mn(2+) as cofactor.

The protein localises to the cytoplasm. The catalysed reaction is (2R,3S)-3-isopropylmalate + NAD(+) = 4-methyl-2-oxopentanoate + CO2 + NADH. The protein operates within amino-acid biosynthesis; L-leucine biosynthesis; L-leucine from 3-methyl-2-oxobutanoate: step 3/4. In terms of biological role, catalyzes the oxidation of 3-carboxy-2-hydroxy-4-methylpentanoate (3-isopropylmalate) to 3-carboxy-4-methyl-2-oxopentanoate. The product decarboxylates to 4-methyl-2 oxopentanoate. The chain is 3-isopropylmalate dehydrogenase from Nostoc sp. (strain PCC 7120 / SAG 25.82 / UTEX 2576).